Reading from the N-terminus, the 1022-residue chain is Histone-lysine N-methyltransferase TRX1 (1022 aa).

A disordered region spans residues 31–151 (SSAPCPLPKK…QRQGVHKEAA (121 aa)). Pro residues predominate over residues 65 to 78 (EGPPPSPATAPPML). The segment covering 127 to 139 (GGAERRGYFSEPK) has biased composition (basic and acidic residues). The 64-residue stretch at 264-327 (PGDLVWAKLT…LKQAVPFLNG (64 aa)) folds into the PWWP domain. Basic and acidic residues predominate over residues 367–393 (SMEKGSSDANSNKDVHSCDNLSEDKTA). The interval 367-399 (SMEKGSSDANSNKDVHSCDNLSEDKTAESGGDY) is disordered. The region spanning 402-461 (MTPIELGNLRVSKLGRIVTDSDYFHNKKHIWPEGYTAFRKFRSVKDPHVVILYKMEVLRN) is the FYR N-terminal domain. In terms of domain architecture, FYR C-terminal spans 465-548 (KARPLFRVTS…SCLKYFENAG (84 aa)). The Phorbol-ester/DAG-type zinc finger occupies 553–609 (GYRAVHVNWKDLDYCSVCDMDEEYEDNLFLQCDKCRMMVHARCYGELEPLNGVLWLC). PHD-type zinc fingers lie at residues 564-615 (LDYC…CRPE) and 677-744 (LLCS…KKHR). Residues 620–744 (SPRCCLCPVT…RLLSYCKKHR (125 aa)) are extended PHD domain (ePHD). The SET domain occupies 861-979 (RRLAFGKSRI…PWEELTYDYR (119 aa)). Cys-943 serves as a coordination point for Zn(2+). Tyr-978 contacts S-adenosyl-L-methionine. Residues 985–1001 (QRLPCYCGFPKCRGVVN) enclose the Post-SET domain. Positions 989, 991, and 996 each coordinate Zn(2+).

It belongs to the class V-like SAM-binding methyltransferase superfamily. Histone-lysine methyltransferase family. TRX/MLL subfamily. In terms of assembly, interacts with EHD3. As to expression, expressed in leaf blades and panicles.

The protein resides in the nucleus. The enzyme catalyses L-lysyl(4)-[histone H3] + S-adenosyl-L-methionine = N(6)-methyl-L-lysyl(4)-[histone H3] + S-adenosyl-L-homocysteine + H(+). In terms of biological role, possesses histone H3 methyltransferase activity in vitro. Methylates 'Lys-4' of histone H3. H3 'Lys-4' methylation represents a specific tag for epigenetic transcriptional activation. Functions as a receptor for the lipid messenger phosphatidylinositol 5-phosphate (PI5P), which negatively regulates its transcriptional activation activity. Involved in the regulation of flowering time and floral induction under long day (LD) conditions. Acts as an activator of flowering under LD conditions. May function through binding to EHD3, a repressor of GHD7. The polypeptide is Histone-lysine N-methyltransferase TRX1 (Oryza sativa subsp. japonica (Rice)).